We begin with the raw amino-acid sequence, 395 residues long: uncharacterized protein (395 aa).

12 helical membrane-spanning segments follow: residues 12–34 (LLASSLLLTIGRGATLPFMTIYL), 44–66 (LIGYAMTIALTIGVVFSLGFGIL), 75–94 (YMLLAITAFASGFIAITLVN), 99–121 (VVLFFALINCAYSVFATVLKAWF), 134–156 (FSINYTMLNIGWTIGPPLGTLLV), 160–182 (INLPFWLAAICSAFPMLFIQIWV), 208–230 (LLWFTCSGFLASFVSGAFASCIS), 245–264 (VVAVVLPVNAAMVVTLQYSV), 271–293 (ANIRALMTAGTLCFVIGLVGFIF), 298–320 (LLLWGMSAAVFTVGEIIYAPGEY), 341–360 (LGWLGAAINPLVSGVVLTSL), and 364–381 (SLFVILALVIIAAWVLML).

Belongs to the major facilitator superfamily.

The protein localises to the cell inner membrane. In terms of biological role, a transporter able to export peptides. When overexpressed, allows cells deleted for multiple peptidases (pepA, pepB, pepD and pepN) to grow in the presence of dipeptides Ala-Gln or Gly-Tyr which otherwise inhibit growth. Cells overexpressing this protein have decreased intracellular levels of Ala-Gln dipeptide, and in a system that produces the Ala-Gln dipeptide overproduction of this protein increases export of the dipeptide. This is an uncharacterized protein from Escherichia coli (strain K12).